A 122-amino-acid chain; its full sequence is Large ribosomal subunit protein uL14 (122 aa).

It belongs to the universal ribosomal protein uL14 family. In terms of assembly, part of the 50S ribosomal subunit. Forms a cluster with proteins L3 and L19. In the 70S ribosome, L14 and L19 interact and together make contacts with the 16S rRNA in bridges B5 and B8.

Functionally, binds to 23S rRNA. Forms part of two intersubunit bridges in the 70S ribosome. The chain is Large ribosomal subunit protein uL14 from Methylobacterium sp. (strain 4-46).